We begin with the raw amino-acid sequence, 430 residues long: Adenylosuccinate synthetase (430 aa).

GTP-binding positions include 13–19 and 41–43; these read GDEGKGK and GHT. The active-site Proton acceptor is aspartate 14. Mg(2+)-binding residues include aspartate 14 and glycine 41. IMP-binding positions include 14 to 17, 39 to 42, threonine 130, arginine 144, glutamine 225, threonine 240, and arginine 304; these read DEGK and NAGH. The active-site Proton donor is the histidine 42. Substrate is bound at residue 300 to 306; it reads ATTGRAR. Residues arginine 306, 332–334, and 414–416 each bind GTP; these read KLD and STG.

The protein belongs to the adenylosuccinate synthetase family. Homodimer. Requires Mg(2+) as cofactor.

The protein resides in the cytoplasm. It carries out the reaction IMP + L-aspartate + GTP = N(6)-(1,2-dicarboxyethyl)-AMP + GDP + phosphate + 2 H(+). The protein operates within purine metabolism; AMP biosynthesis via de novo pathway; AMP from IMP: step 1/2. Its function is as follows. Plays an important role in the de novo pathway of purine nucleotide biosynthesis. Catalyzes the first committed step in the biosynthesis of AMP from IMP. The protein is Adenylosuccinate synthetase of Pseudomonas paraeruginosa (strain DSM 24068 / PA7) (Pseudomonas aeruginosa (strain PA7)).